The chain runs to 537 residues: Phosphoenolpyruvate carboxykinase (ATP) (537 aa).

Residues arginine 61, tyrosine 195, and lysine 201 each coordinate substrate. Residues lysine 201, histidine 220, and 236 to 244 contribute to the ATP site; that span reads GLSGTGKTT. Lysine 201 and histidine 220 together coordinate Mn(2+). Aspartate 257 contributes to the Mn(2+) binding site. ATP contacts are provided by glutamate 285, arginine 323, and threonine 448. Residue arginine 323 participates in substrate binding.

It belongs to the phosphoenolpyruvate carboxykinase (ATP) family. Mn(2+) serves as cofactor.

The protein resides in the cytoplasm. The enzyme catalyses oxaloacetate + ATP = phosphoenolpyruvate + ADP + CO2. It functions in the pathway carbohydrate biosynthesis; gluconeogenesis. Its function is as follows. Involved in the gluconeogenesis. Catalyzes the conversion of oxaloacetate (OAA) to phosphoenolpyruvate (PEP) through direct phosphoryl transfer between the nucleoside triphosphate and OAA. The protein is Phosphoenolpyruvate carboxykinase (ATP) of Rhodopseudomonas palustris (strain TIE-1).